A 395-amino-acid chain; its full sequence is Acid ceramidase (395 aa).

The signal sequence occupies residues 1 to 21 (MLGRSRLTFVLLAAAVTCAEA). A disulfide bridge connects residues Cys31 and Cys340. Cys143 serves as the catalytic Nucleophile. N-linked (GlcNAc...) asparagine glycosylation is found at Asn173, Asn259, Asn286, and Asn348. Cys388 and Cys392 are joined by a disulfide.

It belongs to the acid ceramidase family. As to quaternary structure, heterodimer; disulfide-linked. The heterodimer is composed of the disulfide-linked alpha and beta chains produced by autocatalytic cleavage of the precursor. Post-translationally, N-glycosylated. In terms of processing, proteolytically cleaved into two chains alpha and beta that remain associated via a disulfide bond. Cleavage gives rise to a conformation change that activates the enzyme. The same catalytic Cys residue mediates the autoproteolytic cleavage and subsequent hydrolysis of lipid substrates. The beta chain may undergo an additional C-terminal processing.

It localises to the lysosome. The protein localises to the secreted. It carries out the reaction an N-acylsphing-4-enine + H2O = sphing-4-enine + a fatty acid. The catalysed reaction is N-dodecanoylsphing-4-enine + H2O = dodecanoate + sphing-4-enine. It catalyses the reaction N-tetradecanoylsphing-4-enine + H2O = tetradecanoate + sphing-4-enine. The enzyme catalyses N-hexadecanoylsphing-4-enine + H2O = sphing-4-enine + hexadecanoate. It carries out the reaction N-octadecanoylsphing-4-enine + H2O = sphing-4-enine + octadecanoate. The catalysed reaction is N-dodecanoyl-(4R)-hydroxysphinganine + H2O = (4R)-hydroxysphinganine + dodecanoate. It catalyses the reaction N-(dodecanoyl)-sphinganine + H2O = dodecanoate + sphinganine. The enzyme catalyses N-(acetyl)-sphing-4-enine + H2O = sphing-4-enine + acetate. It carries out the reaction N-(hexanoyl)sphing-4-enine + H2O = hexanoate + sphing-4-enine. The catalysed reaction is N-octanoylsphing-4-enine + H2O = octanoate + sphing-4-enine. It catalyses the reaction N-(9Z-octadecenoyl)-sphing-4-enine + H2O = sphing-4-enine + (9Z)-octadecenoate. The enzyme catalyses N-dodecanoylethanolamine + H2O = dodecanoate + ethanolamine. The protein operates within lipid metabolism; sphingolipid metabolism. Functionally, lysosomal ceramidase that hydrolyzes sphingolipid ceramides into sphingosine and free fatty acids at acidic pH. Ceramides, sphingosine, and its phosphorylated form sphingosine-1-phosphate are bioactive lipids that mediate cellular signaling pathways regulating several biological processes including cell proliferation, apoptosis and differentiation. Has a higher catalytic efficiency towards C12-ceramides versus other ceramides. Also catalyzes the reverse reaction allowing the synthesis of ceramides from fatty acids and sphingosine. For the reverse synthetic reaction, the natural sphingosine D-erythro isomer is more efficiently utilized as a substrate compared to D-erythro-dihydrosphingosine and D-erythro-phytosphingosine, while the fatty acids with chain lengths of 12 or 14 carbons are the most efficiently used. Also has an N-acylethanolamine hydrolase activity. By regulating the levels of ceramides, sphingosine and sphingosine-1-phosphate in the epidermis, mediates the calcium-induced differentiation of epidermal keratinocytes. Also indirectly regulates tumor necrosis factor/TNF-induced apoptosis. By regulating the intracellular balance between ceramides and sphingosine, in adrenocortical cells, probably also acts as a regulator of steroidogenesis. This Heterocephalus glaber (Naked mole rat) protein is Acid ceramidase.